A 513-amino-acid chain; its full sequence is Maturase K (513 aa).

It belongs to the intron maturase 2 family. MatK subfamily.

It is found in the plastid. It localises to the chloroplast. Functionally, usually encoded in the trnK tRNA gene intron. Probably assists in splicing its own and other chloroplast group II introns. This is Maturase K from Danthonia spicata (Poverty oatgrass).